A 216-amino-acid chain; its full sequence is Redox-sensing transcriptional repressor Rex (216 aa).

The H-T-H motif DNA-binding region spans 16 to 55 (VYYRYLNVLLNANKHRVSSTELSEAVQVDSATIRRDFSYF). 90–95 (GVGSLG) is a binding site for NAD(+).

The protein belongs to the transcriptional regulatory Rex family. Homodimer.

The protein resides in the cytoplasm. Modulates transcription in response to changes in cellular NADH/NAD(+) redox state. This chain is Redox-sensing transcriptional repressor Rex, found in Limosilactobacillus fermentum (strain NBRC 3956 / LMG 18251) (Lactobacillus fermentum).